The following is a 324-amino-acid chain: Glyoxylate/hydroxypyruvate reductase B (324 aa).

Residues R237 and E266 contribute to the active site. The active-site Proton donor is H285.

This sequence belongs to the D-isomer specific 2-hydroxyacid dehydrogenase family. GhrB subfamily. Homodimer.

Its subcellular location is the cytoplasm. It catalyses the reaction glycolate + NADP(+) = glyoxylate + NADPH + H(+). The catalysed reaction is (R)-glycerate + NAD(+) = 3-hydroxypyruvate + NADH + H(+). The enzyme catalyses (R)-glycerate + NADP(+) = 3-hydroxypyruvate + NADPH + H(+). In terms of biological role, catalyzes the NADPH-dependent reduction of glyoxylate and hydroxypyruvate into glycolate and glycerate, respectively. This is Glyoxylate/hydroxypyruvate reductase B from Citrobacter koseri (strain ATCC BAA-895 / CDC 4225-83 / SGSC4696).